Here is a 287-residue protein sequence, read N- to C-terminus: Sulfofructosephosphate aldolase (287 aa).

D82 serves as the catalytic Proton donor. Zn(2+) is bound by residues H83 and H180. G181 contacts dihydroxyacetone phosphate. H208 provides a ligand contact to Zn(2+). Residues 209 to 211 (GGS) and 230 to 233 (NVDT) each bind dihydroxyacetone phosphate.

It belongs to the class II fructose-bisphosphate aldolase family. Requires Zn(2+) as cofactor.

The catalysed reaction is 6-deoxy-6-sulfo-D-fructose 1-phosphate = (2S)-3-sulfolactaldehyde + dihydroxyacetone phosphate. Functionally, part of the sulfo-EMP2 pathway, a D-sulfoquinovose degradation pathway that produces sulfolactate (SL). Cleaves 6-deoxy-6-sulfo-D-fructose 1-phosphate (SFP) to form dihydroxyacetone phosphate (DHAP) and 3-sulfolactaldehyde (SLA). The chain is Sulfofructosephosphate aldolase from Alkalicoccus urumqiensis (Bacillus urumqiensis).